Reading from the N-terminus, the 381-residue chain is Succinyl-diaminopimelate desuccinylase 1 (381 aa).

Histidine 70 serves as a coordination point for Zn(2+). Aspartate 72 is an active-site residue. Residue aspartate 103 participates in Zn(2+) binding. The Proton acceptor role is filled by glutamate 136. 3 residues coordinate Zn(2+): glutamate 137, glutamate 165, and histidine 354.

It belongs to the peptidase M20A family. DapE subfamily. As to quaternary structure, homodimer. The cofactor is Zn(2+). Requires Co(2+) as cofactor.

It catalyses the reaction N-succinyl-(2S,6S)-2,6-diaminopimelate + H2O = (2S,6S)-2,6-diaminopimelate + succinate. Its pathway is amino-acid biosynthesis; L-lysine biosynthesis via DAP pathway; LL-2,6-diaminopimelate from (S)-tetrahydrodipicolinate (succinylase route): step 3/3. Catalyzes the hydrolysis of N-succinyl-L,L-diaminopimelic acid (SDAP), forming succinate and LL-2,6-diaminopimelate (DAP), an intermediate involved in the bacterial biosynthesis of lysine and meso-diaminopimelic acid, an essential component of bacterial cell walls. The sequence is that of Succinyl-diaminopimelate desuccinylase 1 from Ruegeria sp. (strain TM1040) (Silicibacter sp.).